A 100-amino-acid chain; its full sequence is Defensin-B4 (100 aa).

The N-terminal stretch at 1-22 is a signal peptide; that stretch reads MRASLLLFILLVYLAHAPQAQG. A propeptide spanning residues 23-26 is cleaved from the precursor; sequence VFGP. Intrachain disulfides connect cysteine 29–cysteine 56, cysteine 36–cysteine 50, and cysteine 40–cysteine 57. Positions 60–100 are disordered; that stretch reads STGTSSSQGSHEVPVINSEPALESKPEPQDTQEEEATMVSE. The segment covering 89-100 has biased composition (acidic residues); it reads DTQEEEATMVSE.

The protein belongs to the beta-defensin family. In terms of tissue distribution, highly expressed in kidney, lowly expressed in spleen, and expressed at lower levels in lung.

It is found in the secreted. In terms of biological role, has antimicrobial activity. The sequence is that of Defensin-B4 from Ornithorhynchus anatinus (Duckbill platypus).